The following is a 1117-amino-acid chain: Protocadherin-11 X-linked (1117 aa).

The N-terminal stretch at 1 to 23 (MDLLSGTHIFAVLLACIVFQSGA) is a signal peptide. Over 24–812 (QEKNYTIREE…ASSPSSDYVK (789 aa)) the chain is Extracellular. Asn27 and Asn48 each carry an N-linked (GlcNAc...) asparagine glycan. Cadherin domains follow at residues 27–139 (NYTI…APLF), 140–249 (PATV…RPVF), 250–355 (KENE…IPSI), 362–466 (NPIN…APVF), 467–570 (TQPF…SPVF), 571–673 (THNE…KPVF), and 677–795 (SSNY…TPVT). Residue Asn344 is glycosylated (N-linked (GlcNAc...) asparagine). Asn553 carries N-linked (GlcNAc...) asparagine glycosylation. Residues 813–833 (IVVAIVAGTITVILVIFITAV) form a helical membrane-spanning segment. Residues 834–1117 (VRCQQSPHLK…DGNSDPESGK (284 aa)) lie on the Cytoplasmic side of the membrane. The segment covering 1029–1039 (TVEIWTHPQPQ) has biased composition (polar residues). The segment at 1029–1117 (TVEIWTHPQP…DGNSDPESGK (89 aa)) is disordered.

In terms of tissue distribution, expressed in adrenal gland, brain, heart, kidney, lung, prostate, skeletal muscle, testis and thymus.

Its subcellular location is the cell membrane. Functionally, potential calcium-dependent cell-adhesion protein. This Sus scrofa (Pig) protein is Protocadherin-11 X-linked (PCDH11X).